Here is a 210-residue protein sequence, read N- to C-terminus: HTH-type transcriptional repressor FabR (210 aa).

Residues 10–70 (KTRRSLVEAA…TMVDESGLML (61 aa)) enclose the HTH tetR-type domain. Residues 33–52 (SLREVAREAGIAPTSFYRHF) constitute a DNA-binding region (H-T-H motif).

As to quaternary structure, homodimer.

The protein resides in the cytoplasm. Its function is as follows. Represses the transcription of fabB, involved in unsaturated fatty acid (UFA) biosynthesis. By controlling UFA production, FabR directly influences the physical properties of the membrane bilayer. In Salmonella paratyphi A (strain ATCC 9150 / SARB42), this protein is HTH-type transcriptional repressor FabR.